Reading from the N-terminus, the 358-residue chain is Peptide chain release factor 1 (358 aa).

Gln233 is modified (N5-methylglutamine).

This sequence belongs to the prokaryotic/mitochondrial release factor family. Methylated by PrmC. Methylation increases the termination efficiency of RF1.

The protein localises to the cytoplasm. In terms of biological role, peptide chain release factor 1 directs the termination of translation in response to the peptide chain termination codons UAG and UAA. This chain is Peptide chain release factor 1, found in Beijerinckia indica subsp. indica (strain ATCC 9039 / DSM 1715 / NCIMB 8712).